Reading from the N-terminus, the 1279-residue chain is Photoreceptor cilium actin regulator (1279 aa).

Gly2 carries N-myristoyl glycine lipidation. A lipid anchor (S-palmitoyl cysteine) is attached at Cys3. 5 disordered regions span residues 101–168 (NKPQ…KGRV), 380–598 (AAQV…SHVE), 802–821 (EVSE…ENLP), 860–1107 (ASHP…TTAK), and 1127–1279 (KSSS…KEIS). The span at 126–168 (FSGKESKENTPQETSKGNRESVCHQPDSQDHCRQSATESKGRV) shows a compositional bias: basic and acidic residues. The span at 477 to 491 (SEEEDCSPEEEDELS) shows a compositional bias: acidic residues. Basic and acidic residues-rich tracts occupy residues 535 to 547 (LKMK…RIKF) and 580 to 598 (GPER…SHVE). Positions 804–818 (SESEDISGDVEEDLE) are enriched in acidic residues. Polar residues-rich tracts occupy residues 886–901 (GSGS…SGST), 913–925 (DLNS…PSSE), and 955–965 (TNPTPGQSRTL). A compositionally biased stretch (basic and acidic residues) spans 972–990 (FSRDPHSSEASRKGPERSL). Residues 1047–1062 (RKTTSPPCQHPQSNPA) show a composition bias toward polar residues. Residues 1076–1090 (PSSASCSSPSVSPSR) are compositionally biased toward low complexity. The segment covering 1091 to 1100 (GSKDSIHSED) has biased composition (basic and acidic residues). The span at 1226–1241 (WNNSRVPELQGSSTKR) shows a compositional bias: polar residues. Residues 1259 to 1279 (RMNRGQDRPQPESQPQHKEIS) are compositionally biased toward basic and acidic residues.

Specifically expressed in retina.

It is found in the cell projection. Its subcellular location is the cilium. The protein resides in the photoreceptor outer segment. The protein localises to the photoreceptor inner segment. Its function is as follows. Plays an essential role for normal photoreceptor cell maintenance and vision. The sequence is that of Photoreceptor cilium actin regulator from Mus musculus (Mouse).